The primary structure comprises 299 residues: Ribosomal RNA small subunit methyltransferase H (299 aa).

S-adenosyl-L-methionine-binding positions include 36–38 (GGH), Asp-55, Tyr-82, Asp-103, and Gln-110. Composition is skewed to basic and acidic residues over residues 269-282 (PVRPSEEEIRENPR) and 289-299 (RAAERIEEGGD). Positions 269–299 (PVRPSEEEIRENPRARSGRLRAAERIEEGGD) are disordered.

It belongs to the methyltransferase superfamily. RsmH family.

It is found in the cytoplasm. The catalysed reaction is cytidine(1402) in 16S rRNA + S-adenosyl-L-methionine = N(4)-methylcytidine(1402) in 16S rRNA + S-adenosyl-L-homocysteine + H(+). Specifically methylates the N4 position of cytidine in position 1402 (C1402) of 16S rRNA. The protein is Ribosomal RNA small subunit methyltransferase H of Thermotoga maritima (strain ATCC 43589 / DSM 3109 / JCM 10099 / NBRC 100826 / MSB8).